A 602-amino-acid chain; its full sequence is Elongation factor 4 (602 aa).

The tr-type G domain maps to 8-190 (DLIRNFSIVA…AIVHRLPPPK (183 aa)). GTP-binding positions include 20–25 (DHGKST) and 137–140 (NKID).

It belongs to the TRAFAC class translation factor GTPase superfamily. Classic translation factor GTPase family. LepA subfamily.

The protein localises to the cell inner membrane. The catalysed reaction is GTP + H2O = GDP + phosphate + H(+). Its function is as follows. Required for accurate and efficient protein synthesis under certain stress conditions. May act as a fidelity factor of the translation reaction, by catalyzing a one-codon backward translocation of tRNAs on improperly translocated ribosomes. Back-translocation proceeds from a post-translocation (POST) complex to a pre-translocation (PRE) complex, thus giving elongation factor G a second chance to translocate the tRNAs correctly. Binds to ribosomes in a GTP-dependent manner. The sequence is that of Elongation factor 4 from Cereibacter sphaeroides (strain ATCC 17029 / ATH 2.4.9) (Rhodobacter sphaeroides).